The chain runs to 208 residues: MRTPKHDLPEAVAKRIPIYYRYFKLLETDGIERIKSEQLAKLVAIPSATIRRDFSYIGDLGRSGYGYEVSHLIQIFSAVLKADILTKMAVIGVGNLGRALIENNFRRNDNLQITCAFDTNPALVGQTLNGVPIYAIDQLATVIPAAGITTAISTVPSEASQRSAEQLIDAGITSILNFAPTRLQVPRHINVRYLDLTAELQTLLLFEE.

The segment at residues 18–57 is a DNA-binding region (H-T-H motif); sequence IYYRYFKLLETDGIERIKSEQLAKLVAIPSATIRRDFSYI. 92–97 provides a ligand contact to NAD(+); that stretch reads GVGNLG.

It belongs to the transcriptional regulatory Rex family. Homodimer.

The protein localises to the cytoplasm. Functionally, modulates transcription in response to changes in cellular NADH/NAD(+) redox state. The polypeptide is Redox-sensing transcriptional repressor Rex (Latilactobacillus sakei subsp. sakei (strain 23K) (Lactobacillus sakei subsp. sakei)).